A 292-amino-acid polypeptide reads, in one-letter code: Homoserine kinase (292 aa).

An ATP-binding site is contributed by 84 to 94 (PLSRGLGSSSA).

Belongs to the GHMP kinase family. Homoserine kinase subfamily.

Its subcellular location is the cytoplasm. The catalysed reaction is L-homoserine + ATP = O-phospho-L-homoserine + ADP + H(+). The protein operates within amino-acid biosynthesis; L-threonine biosynthesis; L-threonine from L-aspartate: step 4/5. Catalyzes the ATP-dependent phosphorylation of L-homoserine to L-homoserine phosphate. This is Homoserine kinase from Campylobacter jejuni subsp. jejuni serotype O:23/36 (strain 81-176).